The sequence spans 486 residues: Histone acetyltransferase type B catalytic subunit DDB_G0274269 (486 aa).

Residues 27–69 (DIEELKNKDNKENKDKENKAHIKDEGEEEEQKEKKEEEEKEDD) adopt a coiled-coil conformation. Basic and acidic residues predominate over residues 33–50 (NKDNKENKDKENKAHIKD). The interval 33–78 (NKDNKENKDKENKAHIKDEGEEEEQKEKKEEEEKEDDGGPISFHPT) is disordered. The 198-residue stretch at 189–386 (VVFRYHEKLQ…YRISIKKRLY (198 aa)) folds into the N-acetyltransferase domain. Residues 260–262 (YLI) and 267–273 (QRMGHGK) contribute to the acetyl-CoA site. E299 acts as the Proton donor/acceptor in catalysis. Residues 392–481 (DSEQIEKIKQ…KNYHKTLSSL (90 aa)) are a coiled coil.

This sequence belongs to the HAT1 family.

The enzyme catalyses L-lysyl-[protein] + acetyl-CoA = N(6)-acetyl-L-lysyl-[protein] + CoA + H(+). The protein is Histone acetyltransferase type B catalytic subunit DDB_G0274269 of Dictyostelium discoideum (Social amoeba).